A 661-amino-acid polypeptide reads, in one-letter code: UvrABC system protein B (661 aa).

The 387-residue stretch at 28–414 (KGVKEGKRHQ…HTDEMIEQII (387 aa)) folds into the Helicase ATP-binding domain. 41–48 (GATGTGKT) is an ATP binding site. The Beta-hairpin motif lies at 94-117 (YYDYYQPEAYVPSTDTFIEKDASI). Residues 432-598 (QIDDLLSEIQ…TINKKIHDVI (167 aa)) enclose the Helicase C-terminal domain. Residues 604-625 (NDETNEKQQTELPKKMTKKERQ) form a disordered region. Residues 607–617 (TNEKQQTELPK) show a composition bias toward basic and acidic residues. In terms of domain architecture, UVR spans 625–660 (QKTIENIEKEMKKAAKDLDFEKATELRDMLFELKSE).

Belongs to the UvrB family. In terms of assembly, forms a heterotetramer with UvrA during the search for lesions. Interacts with UvrC in an incision complex.

The protein localises to the cytoplasm. Functionally, the UvrABC repair system catalyzes the recognition and processing of DNA lesions. A damage recognition complex composed of 2 UvrA and 2 UvrB subunits scans DNA for abnormalities. Upon binding of the UvrA(2)B(2) complex to a putative damaged site, the DNA wraps around one UvrB monomer. DNA wrap is dependent on ATP binding by UvrB and probably causes local melting of the DNA helix, facilitating insertion of UvrB beta-hairpin between the DNA strands. Then UvrB probes one DNA strand for the presence of a lesion. If a lesion is found the UvrA subunits dissociate and the UvrB-DNA preincision complex is formed. This complex is subsequently bound by UvrC and the second UvrB is released. If no lesion is found, the DNA wraps around the other UvrB subunit that will check the other stand for damage. The chain is UvrABC system protein B from Staphylococcus haemolyticus (strain JCSC1435).